The primary structure comprises 597 residues: Sialic acid-binding Ig-like lectin 12 (597 aa).

A signal peptide spans 1–20 (MLLLLLLLLLPPLLCGRVGA). Ig-like V-type domains are found at residues 21-144 (KEQK…VNVT) and 145-271 (ASQD…VHVT). Over 21 to 483 (KEQKDYLLTM…RPISGVTLGA (463 aa)) the chain is Extracellular. Cys46 and Cys106 form a disulfide bridge. N-linked (GlcNAc...) asparagine glycans are attached at residues Asn142, Asn181, Asn232, and Asn292. Cystine bridges form between Cys168–Cys301, Cys173–Cys233, and Cys295–Cys344. Residues 277–360 (PTFSIPGTLE…AGVTTTRAVR (84 aa)) form the Ig-like C2-type 1 domain. Residues Asn362, Asn369, and Asn387 are each glycosylated (N-linked (GlcNAc...) asparagine). Residues 367–464 (PQNLTMTVFQ…GSQHISLSLS (98 aa)) enclose the Ig-like C2-type 2 domain. A disulfide bond links Cys403 and Cys448. A helical transmembrane segment spans residues 484–504 (VGGAGATALVFLSFCIIFVVV). Residues 505–597 (RSCRKKSARP…YEYSEINILK (93 aa)) are Cytoplasmic-facing. A disordered region spans residues 514-558 (PAVGVGDTGMEDTNAVRGSASQGPLIESPADDSPPHHAPPALATP). The ITIM motif signature appears at 565–570 (IQYASL). Residues Tyr567 and Tyr590 each carry the phosphotyrosine modification. Residues 588–593 (YEYSEI) carry the SLAM-like motif motif.

The protein belongs to the immunoglobulin superfamily. SIGLEC (sialic acid binding Ig-like lectin) family.

The protein resides in the membrane. Putative adhesion molecule that mediates sialic-acid dependent binding to cells. The sialic acid recognition site may be masked by cis interactions with sialic acids on the same cell surface. This chain is Sialic acid-binding Ig-like lectin 12 (SIGLEC12), found in Pan troglodytes (Chimpanzee).